The chain runs to 260 residues: Homeobox-leucine zipper protein HOX25 (260 aa).

The segment covering Met-1–Gly-10 has biased composition (acidic residues). Disordered regions lie at residues Met-1 to Arg-24, Ala-121 to Ala-145, and Ser-190 to Ser-221. Positions Ala-19–Gln-79 form a DNA-binding region, homeobox. Residues Lys-78–Asn-122 form a leucine-zipper region. A compositionally biased stretch (acidic residues) spans Ser-205–Tyr-218.

This sequence belongs to the HD-ZIP homeobox family. Class I subfamily. As to expression, expressed in roots, leaf sheaths and blades and panicles.

The protein localises to the nucleus. Probable transcription factor. The polypeptide is Homeobox-leucine zipper protein HOX25 (HOX25) (Oryza sativa subsp. indica (Rice)).